The sequence spans 159 residues: Ribosomal RNA large subunit methyltransferase H (159 aa).

Residues Leu76, Gly108, and 127 to 132 (FSKMTF) each bind S-adenosyl-L-methionine.

It belongs to the RNA methyltransferase RlmH family. Homodimer.

It is found in the cytoplasm. It catalyses the reaction pseudouridine(1915) in 23S rRNA + S-adenosyl-L-methionine = N(3)-methylpseudouridine(1915) in 23S rRNA + S-adenosyl-L-homocysteine + H(+). In terms of biological role, specifically methylates the pseudouridine at position 1915 (m3Psi1915) in 23S rRNA. The chain is Ribosomal RNA large subunit methyltransferase H from Lachnoclostridium phytofermentans (strain ATCC 700394 / DSM 18823 / ISDg) (Clostridium phytofermentans).